A 99-amino-acid chain; its full sequence is Transcriptional regulator WhiB2 (99 aa).

A 4Fe-4S Wbl-type domain is found at 33-90 (LCAQTDPEAFFPEKGGSTRDAKRVCAKCEVREQCLKWAIDHDERFGIWGGMSERERRR). Residues Cys34, Cys57, Cys60, and Cys66 each coordinate [4Fe-4S] cluster.

The protein belongs to the WhiB family. [4Fe-4S] cluster is required as a cofactor. In terms of processing, the Fe-S cluster can be nitrosylated by nitric oxide (NO). Upon Fe-S cluster removal intramolecular disulfide bonds are formed.

The protein resides in the cytoplasm. Functionally, acts as a transcriptional regulator. Probably redox-responsive. The apo- but not holo-form probably binds DNA. In Bifidobacterium longum (strain NCC 2705), this protein is Transcriptional regulator WhiB2 (whiB2).